The following is a 394-amino-acid chain: Obg-like ATPase 1 (394 aa).

An OBG-type G domain is found at Leu-25 to Cys-282. ATP is bound by residues Asn-34–Thr-39, Phe-56–Asp-60, and Asp-94–Gly-97. Ser-38 and Thr-58 together coordinate Mg(2+). A GTP-binding site is contributed by Phe-129. Residues Asn-230–Met-231, Met-231, and Ser-263–Ala-265 contribute to the ATP site. Ser-263–Ala-265 is a binding site for GTP. One can recognise a TGS domain in the interval His-303 to Phe-386.

Belongs to the TRAFAC class OBG-HflX-like GTPase superfamily. OBG GTPase family. YchF/OLA1 subfamily. In terms of assembly, monomer (Potential). Interacts with GAP1. Requires Mg(2+) as cofactor.

The protein resides in the cytoplasm. The protein localises to the cell membrane. It is found in the cytosol. With respect to regulation, activated by GAP1. In terms of biological role, hydrolyzes ATP, and can also hydrolyze GTP with lower efficiency. Has lower affinity for GTP (Potential). Exhibits GTPase activity. Exhibits similar binding affinities and hydrolytic activities toward both GTP and ATP. Binds to the 26 S ribosomal RNA in vitro, but not to the 5.8 S or 18 S rRNA. Confers sensitivity to salinity stress by suppressing the anti-oxidation enzymatic activities and increasing lipid peroxidation thus leading to the accumulation of reactive oxygen species (ROS). The sequence is that of Obg-like ATPase 1 from Oryza sativa subsp. indica (Rice).